We begin with the raw amino-acid sequence, 393 residues long: uncharacterized protein (393 aa).

Disordered regions lie at residues 77–118 and 259–296; these read DSNN…SIRP and INNN…DESN. Over residues 79–92 the composition is skewed to low complexity; that stretch reads NNNNNNNNNNNNNN. Polar residues predominate over residues 103–114; that stretch reads IRQSLSSPQQLV. The span at 259–289 shows a compositional bias: low complexity; that stretch reads INNNNNNNNNNSNNNNNNNNSNNNDNNNNIN.

This is an uncharacterized protein from Dictyostelium discoideum (Social amoeba).